A 426-amino-acid polypeptide reads, in one-letter code: L-ascorbate peroxidase T, chloroplastic (426 aa).

H112 (proton acceptor) is an active-site residue. Residue H241 coordinates heme b. K(+) is bound at residue T242. Residues 245–269 (RARPDRSGWGKPETKYTKTGPGEAG) are disordered. Residues 246–260 (ARPDRSGWGKPETKY) are compositionally biased toward basic and acidic residues. Positions 274 and 281 each coordinate K(+). A helical membrane pass occupies residues 397–417 (YFLNIIIAIGVLVLLSTLFGG).

Belongs to the peroxidase family. Ascorbate peroxidase subfamily. The cofactor is heme b.

The protein localises to the plastid. Its subcellular location is the chloroplast thylakoid membrane. It carries out the reaction L-ascorbate + H2O2 = L-dehydroascorbate + 2 H2O. Functionally, plays a key role in hydrogen peroxide removal. The polypeptide is L-ascorbate peroxidase T, chloroplastic (APXT) (Arabidopsis thaliana (Mouse-ear cress)).